Consider the following 428-residue polypeptide: MNYLFKNGRYMNEEGKIVATDLLVQDGKIAKVAENITADNAEVIDVNGKLIAPGLVDVHVHLREPGGEHKETIETGTLAAAKGGFTTICAMPNTRPVPDCREHMEDLQNRIKEKAHVNVLPYGAITVRQAGSEMTDFETLKELGAFAFTDDGVGVQDASMMLAAMKRAAKLNMAVVAHCEENTLINKGCVHEGKFSEKHGLNGIPSVCESVHIARDILLAEAADCHYHVCHVSTKGSVRVIRDAKRAGIKVTAEVTPHHLVLCEDDIPSADPNFKMNPPLRGKEDHEALIEGLLDGTIDMIATDHAPHTAEEKAQGIERAPFGITGFETAFPLLYTNLVKKGIITLEQLIQFLTEKPADTFGLEAGRLKEGRTADITIIDLEQEEEIDPTTFLSKGKNTPFAGWKCQGWPVMTIVGGKIAWQKESALV.

The Zn(2+) site is built by His59 and His61. Residues 61–63 (HLR) and Asn93 contribute to the substrate site. 3 residues coordinate Zn(2+): Asp151, His178, and His231. Asn277 is a binding site for substrate. Residue Asp304 participates in Zn(2+) binding. Asp304 is an active-site residue. Residues His308 and 322-323 (FG) each bind substrate.

Belongs to the metallo-dependent hydrolases superfamily. DHOase family. Class I DHOase subfamily. Requires Zn(2+) as cofactor.

The catalysed reaction is (S)-dihydroorotate + H2O = N-carbamoyl-L-aspartate + H(+). The protein operates within pyrimidine metabolism; UMP biosynthesis via de novo pathway; (S)-dihydroorotate from bicarbonate: step 3/3. Catalyzes the reversible cyclization of carbamoyl aspartate to dihydroorotate. This is Dihydroorotase from Bacillus anthracis (strain A0248).